The chain runs to 400 residues: Lysophospholipid transporter LplT (400 aa).

The next 12 membrane-spanning stretches (helical) occupy residues valine 19 to alanine 39, valine 53 to alanine 73, alanine 91 to isoleucine 111, leucine 139 to alanine 159, isoleucine 164 to isoleucine 184, serine 195 to tryptophan 213, leucine 227 to leucine 247, tyrosine 257 to valine 277, threonine 281 to leucine 301, alanine 304 to valine 324, asparagine 352 to alanine 372, and valine 373 to tryptophan 393.

This sequence belongs to the major facilitator superfamily. LplT (TC 2.A.1.42) family.

It localises to the cell inner membrane. Functionally, catalyzes the facilitated diffusion of 2-acyl-glycero-3-phosphoethanolamine (2-acyl-GPE) into the cell. This Salmonella typhi protein is Lysophospholipid transporter LplT.